Here is a 275-residue protein sequence, read N- to C-terminus: NH(3)-dependent NAD(+) synthetase (275 aa).

43–50 contacts ATP; sequence GISGGVDS. Asp49 is a binding site for Mg(2+). Arg145 serves as a coordination point for deamido-NAD(+). Thr165 is a binding site for ATP. Position 170 (Glu170) interacts with Mg(2+). Residues Lys178 and Asp185 each coordinate deamido-NAD(+). ATP is bound by residues Lys194 and Thr216. Deamido-NAD(+) is bound at residue 265–266; sequence HK.

This sequence belongs to the NAD synthetase family. As to quaternary structure, homodimer.

The enzyme catalyses deamido-NAD(+) + NH4(+) + ATP = AMP + diphosphate + NAD(+) + H(+). It participates in cofactor biosynthesis; NAD(+) biosynthesis; NAD(+) from deamido-NAD(+) (ammonia route): step 1/1. Functionally, catalyzes the ATP-dependent amidation of deamido-NAD to form NAD. Uses ammonia as a nitrogen source. The chain is NH(3)-dependent NAD(+) synthetase from Shewanella denitrificans (strain OS217 / ATCC BAA-1090 / DSM 15013).